The following is a 47-amino-acid chain: PhoP/PhoQ regulator MgrB (47 aa).

Residues 6-26 (WVILIIVALVCLLLWAQVFNI) form a helical membrane-spanning segment.

This sequence belongs to the MgrB family. In terms of assembly, may form homooligomers. Probably interacts with the periplasmic domain of PhoQ.

It is found in the cell inner membrane. Its function is as follows. PhoP-regulated transcription is redox-sensitive, being activated when the periplasm becomes more reducing. MgrB acts between DsbA/DsbB and PhoP/PhoQ in this pathway. Represses PhoP/PhoQ signaling, possibly by binding to the periplasmic domain of PhoQ, altering its activity and that of downstream effector PhoP. The polypeptide is PhoP/PhoQ regulator MgrB (Citrobacter koseri (strain ATCC BAA-895 / CDC 4225-83 / SGSC4696)).